The sequence spans 209 residues: Guanylate kinase (209 aa).

In terms of domain architecture, Guanylate kinase-like spans 7-185 (GNLYIVAAPS…AAMELQSIVI (179 aa)). 14–21 (APSGGGKT) is an ATP binding site.

This sequence belongs to the guanylate kinase family.

The protein localises to the cytoplasm. The enzyme catalyses GMP + ATP = GDP + ADP. Functionally, essential for recycling GMP and indirectly, cGMP. This chain is Guanylate kinase, found in Legionella pneumophila (strain Lens).